Here is a 282-residue protein sequence, read N- to C-terminus: Aldo-keto reductase MT3049 (282 aa).

The active-site Proton donor is Tyr-57. The NADPH site is built by Leu-197, Val-235, Arg-237, Ser-238, Ala-239, Arg-243, Ser-246, Asn-247, and Arg-273.

Belongs to the aldo/keto reductase family.

This Mycobacterium tuberculosis (strain CDC 1551 / Oshkosh) protein is Aldo-keto reductase MT3049.